Consider the following 464-residue polypeptide: Argininosuccinate lyase (464 aa).

The protein belongs to the lyase 1 family. Argininosuccinate lyase subfamily.

It is found in the cytoplasm. The catalysed reaction is 2-(N(omega)-L-arginino)succinate = fumarate + L-arginine. Its pathway is amino-acid biosynthesis; L-arginine biosynthesis; L-arginine from L-ornithine and carbamoyl phosphate: step 3/3. The polypeptide is Argininosuccinate lyase (Crocosphaera subtropica (strain ATCC 51142 / BH68) (Cyanothece sp. (strain ATCC 51142))).